A 136-amino-acid polypeptide reads, in one-letter code: Small ribosomal subunit protein eS8 (136 aa).

The disordered stretch occupies residues 1–23 (MGVYHGNDLKKPTGGKKRPHQKV). The span at 13-23 (TGGKKRPHQKV) shows a compositional bias: basic residues.

It belongs to the eukaryotic ribosomal protein eS8 family. In terms of assembly, part of the 30S ribosomal subunit.

The sequence is that of Small ribosomal subunit protein eS8 from Hyperthermus butylicus (strain DSM 5456 / JCM 9403 / PLM1-5).